Consider the following 467-residue polypeptide: 3-isopropylmalate dehydratase large subunit (467 aa).

[4Fe-4S] cluster contacts are provided by C347, C407, and C410.

Belongs to the aconitase/IPM isomerase family. LeuC type 1 subfamily. As to quaternary structure, heterodimer of LeuC and LeuD. It depends on [4Fe-4S] cluster as a cofactor.

It catalyses the reaction (2R,3S)-3-isopropylmalate = (2S)-2-isopropylmalate. The protein operates within amino-acid biosynthesis; L-leucine biosynthesis; L-leucine from 3-methyl-2-oxobutanoate: step 2/4. In terms of biological role, catalyzes the isomerization between 2-isopropylmalate and 3-isopropylmalate, via the formation of 2-isopropylmaleate. This chain is 3-isopropylmalate dehydratase large subunit, found in Pelagibacter ubique (strain HTCC1062).